We begin with the raw amino-acid sequence, 921 residues long: Valine--tRNA ligase (921 aa).

The 'HIGH' region signature appears at 40-50; sequence PNVTGSLHMGH. Residues 522-526 carry the 'KMSKS' region motif; the sequence is KMSKS. An ATP-binding site is contributed by K525. Residues 849 to 921 are a coiled coil; sequence MADLIDKEAE…LQHKNRIESL (73 aa).

This sequence belongs to the class-I aminoacyl-tRNA synthetase family. ValS type 1 subfamily. Monomer.

The protein resides in the cytoplasm. The catalysed reaction is tRNA(Val) + L-valine + ATP = L-valyl-tRNA(Val) + AMP + diphosphate. Functionally, catalyzes the attachment of valine to tRNA(Val). As ValRS can inadvertently accommodate and process structurally similar amino acids such as threonine, to avoid such errors, it has a 'posttransfer' editing activity that hydrolyzes mischarged Thr-tRNA(Val) in a tRNA-dependent manner. This chain is Valine--tRNA ligase, found in Legionella pneumophila (strain Lens).